The primary structure comprises 487 residues: Serine/threonine-protein kinase 4 (487 aa).

Residue Met-1 is modified to N-acetylmethionine. At Thr-3 the chain carries Phosphothreonine. A Protein kinase domain is found at 30–281; the sequence is FDVLEKLGEG…ATQLLQHPFV (252 aa). ATP contacts are provided by residues 36-44 and Lys-59; that span reads LGEGSYGSV. The active-site Proton acceptor is the Asp-149. Thr-183 carries the phosphothreonine; by autocatalysis modification. 2 positions are modified to phosphoserine: Ser-265 and Ser-320. The stretch at 289-327 forms a coiled coil; the sequence is ILRDLINEAMDVKLKRQEAQQREVDQEEEENSEEDELDS. The disordered stretch occupies residues 305–332; that stretch reads QEAQQREVDQEEEENSEEDELDSGTMVR. Over residues 313-326 the composition is skewed to acidic residues; it reads DQEEEENSEEDELD. Thr-340 and Thr-367 each carry phosphothreonine. Thr-387 is subject to Phosphothreonine; by PKB/AKT1. Residues Ser-410 and Ser-414 each carry the phosphoserine modification. At Tyr-433 the chain carries Phosphotyrosine. In terms of domain architecture, SARAH spans 433–480; that stretch reads YEFLKSWTVEDLQKRLLALDPMMEQEIEEIRQKYQSKRQPILDAIEAK.

Belongs to the protein kinase superfamily. STE Ser/Thr protein kinase family. STE20 subfamily. In terms of assembly, homodimer; mediated via the coiled-coil region. Interacts with NORE1, which inhibits autoactivation. Interacts with and stabilizes SAV1. Interacts with RASSF1. Interacts with FOXO3. Interacts with RASSF2 (via SARAH domain). Interacts with AR, PKB/AKT1, TNNI3 and SIRT1. Interacts with DLG5 (via PDZ domain 3). Interacts with MARK3 and SCRIB in the presence of DLG5. Requires Mg(2+) as cofactor. In terms of processing, autophosphorylated on serine and threonine residues. Phosphorylation at Thr-387 by PKB/AKT1, leads to inhibition of its: kinase activity, nuclear translocation and autophosphorylation at Thr-183. It also diminishes its cleavage by caspases and its ability to phosphorylate FOXO3. Post-translationally, proteolytically cleaved by caspase-3 during apoptosis at Asp-326 and Asp-349 resulting in a 37 kDa or a 39 kDa subunit respectively. The 39 kDa subunit is further cleaved into the 37 kDa form. Proteolytic cleavage results in kinase activation and nuclear translocation of the truncated form (MST1/N). It is less likely that cleavage at Asp-349 is a prerequisite for activation as this site is not conserved in the murine ortholog.

It localises to the cytoplasm. The protein localises to the nucleus. It carries out the reaction L-seryl-[protein] + ATP = O-phospho-L-seryl-[protein] + ADP + H(+). The enzyme catalyses L-threonyl-[protein] + ATP = O-phospho-L-threonyl-[protein] + ADP + H(+). Its activity is regulated as follows. Inhibited by the C-terminal non-catalytic region. Activated by caspase-cleavage. Full activation also requires homodimerization and autophosphorylation of Thr-183. Activated by RASSF1 which acts by preventing its dephosphorylation. In terms of biological role, stress-activated, pro-apoptotic kinase which, following caspase-cleavage, enters the nucleus and induces chromatin condensation followed by internucleosomal DNA fragmentation. Key component of the Hippo signaling pathway which plays a pivotal role in organ size control and tumor suppression by restricting proliferation and promoting apoptosis. The core of this pathway is composed of a kinase cascade wherein STK3/MST2 and STK4/MST1, in complex with its regulatory protein SAV1, phosphorylates and activates LATS1/2 in complex with its regulatory protein MOB1, which in turn phosphorylates and inactivates YAP1 oncoprotein and WWTR1/TAZ. Phosphorylation of YAP1 by LATS2 inhibits its translocation into the nucleus to regulate cellular genes important for cell proliferation, cell death, and cell migration. STK3/MST2 and STK4/MST1 are required to repress proliferation of mature hepatocytes, to prevent activation of facultative adult liver stem cells (oval cells), and to inhibit tumor formation. Phosphorylates 'Ser-14' of histone H2B (H2BS14ph) during apoptosis. Phosphorylates FOXO3 upon oxidative stress, which results in its nuclear translocation and cell death initiation. Phosphorylates MOBKL1A, MOBKL1B and RASSF2. Phosphorylates TNNI3 (cardiac Tn-I) and alters its binding affinity to TNNC1 (cardiac Tn-C) and TNNT2 (cardiac Tn-T). Phosphorylates FOXO1 on 'Ser-212' and regulates its activation and stimulates transcription of PMAIP1 in a FOXO1-dependent manner. Phosphorylates SIRT1 and inhibits SIRT1-mediated p53/TP53 deacetylation, thereby promoting p53/TP53 dependent transcription and apoptosis upon DNA damage. Acts as an inhibitor of PKB/AKT1. Phosphorylates AR on 'Ser-650' and suppresses its activity by intersecting with PKB/AKT1 signaling and antagonizing formation of AR-chromatin complexes. The sequence is that of Serine/threonine-protein kinase 4 (STK4) from Bos taurus (Bovine).